An 89-amino-acid chain; its full sequence is MERMTAWVHGFVQGVGFRWWTRARALELGLVGYAANQKDGRVLVIAEGPRDKLETLLTLLRSGDTPGAVDLVVEQWDSARGDLTGFVER.

An Acylphosphatase-like domain is found at 3–89 (RMTAWVHGFV…RGDLTGFVER (87 aa)). Catalysis depends on residues Arg-18 and Asn-36.

It belongs to the acylphosphatase family.

The enzyme catalyses an acyl phosphate + H2O = a carboxylate + phosphate + H(+). The polypeptide is Acylphosphatase (acyP) (Rhodococcus jostii (strain RHA1)).